Consider the following 512-residue polypeptide: Cytochrome P450 monooxygenase poxM (512 aa).

The chain crosses the membrane as a helical span at residues 15 to 35; that stretch reads LLKGATIALSFFSLYLFGLVI. Cys449 contributes to the heme binding site.

This sequence belongs to the cytochrome P450 family. The cofactor is heme.

Its subcellular location is the membrane. The protein operates within secondary metabolite biosynthesis. Its function is as follows. Cytochrome P450 monooxygenase; part of the gene cluster that mediates the biosynthesis of oxaleimides, cytotoxic compounds containing an unusual disubstituted succinimide moiety. The first step of the pathway is provided by the HR-PKS poxF that serves in a new mode of collaborative biosynthesis with the PKS-NRPS poxE, by providing the olefin containing amino acid substrate via the synthesis of an ACP-bound dec-4-enoate. The cytochrome P450 monooxygenase poxM-catalyzed oxidation at the alpha-position creates the enzyme-bound 2-hydroxydec-4-enoyl-ACP thioester, which may be prone to spontaneous hydrolysis to yield 2-hydroxydec-4-enoic acid due to increased electrophilicity of the carbonyl. 2-hydroxydec-4-enoic acid can then be further oxidized by poxM to yield the alpha-ketoacid 2-oxodec-4-enoicacid, which is reductively aminated by the aminotransferase poxL to yield (S,E)-2-aminodec-4-enoic acid. The Hybrid PKS-NRPS synthetase poxE then performs condensation between the octaketide product of its PKS modules and the amino group of (S,E)-2-aminodec-4-enoic acid which is activated and incorporated by the adenylation domain. The resulting aminoacyl product can be cyclized by the Diels-Alderase PoxQ and reductively released by the reductive (R) domain of poxE to yield an aldehyde intermediate. The released aldehyde is then substrate for a Knoevenagel condensation by the hydrolyase poxO followed by an oxidation at the 5-position of the pyrrolidone ring. The presence of the olefin from the amino acid building block allows for migration of the substituted allyl group to occur. This allylic transposition reaction takes place in a conjugate addition, semipinacol-like fashion to yield a succinimide intermediate. Iterative two-electron oxidations of the C7 methyl of the succinimide intermediate to the carboxylic acid can be catalyzed by one of two remaining cytochrome P450 monooxygenasess poxC or poxD to yield oxaleimide A. Subsequent oxidation yields the maleimide scaffold oxaleimide I. Both oxaleimide A and oxaleimide I can undergo oxidative modifications in the decalin ring to yield the series of products oxaleimides B to H. This is Cytochrome P450 monooxygenase poxM from Penicillium oxalicum (strain 114-2 / CGMCC 5302) (Penicillium decumbens).